Here is a 180-residue protein sequence, read N- to C-terminus: Nucleoside triphosphate/diphosphate phosphatase (180 aa).

Arginine 26 serves as the catalytic Proton donor. Residues asparagine 90, aspartate 106, aspartate 108, aspartate 110, aspartate 123, and glutamate 126 each coordinate Mg(2+).

It belongs to the Ntdp family. The cofactor is Mg(2+).

It carries out the reaction a ribonucleoside 5'-triphosphate + H2O = a ribonucleoside 5'-diphosphate + phosphate + H(+). The enzyme catalyses a ribonucleoside 5'-diphosphate + H2O = a ribonucleoside 5'-phosphate + phosphate + H(+). Functionally, has nucleoside phosphatase activity towards nucleoside triphosphates and nucleoside diphosphates. The sequence is that of Nucleoside triphosphate/diphosphate phosphatase from Staphylococcus haemolyticus (strain JCSC1435).